Consider the following 338-residue polypeptide: Anthranilate phosphoribosyltransferase (338 aa).

5-phospho-alpha-D-ribose 1-diphosphate-binding positions include Gly81, 84–85 (GD), Thr89, 91–94 (NIST), 109–117 (KHGNRGVSS), and Ser121. Gly81 lines the anthranilate pocket. Position 93 (Ser93) interacts with Mg(2+). Asn112 contacts anthranilate. Anthranilate is bound at residue Arg167. Positions 225 and 226 each coordinate Mg(2+).

The protein belongs to the anthranilate phosphoribosyltransferase family. In terms of assembly, homodimer. The cofactor is Mg(2+).

The enzyme catalyses N-(5-phospho-beta-D-ribosyl)anthranilate + diphosphate = 5-phospho-alpha-D-ribose 1-diphosphate + anthranilate. It functions in the pathway amino-acid biosynthesis; L-tryptophan biosynthesis; L-tryptophan from chorismate: step 2/5. Functionally, catalyzes the transfer of the phosphoribosyl group of 5-phosphorylribose-1-pyrophosphate (PRPP) to anthranilate to yield N-(5'-phosphoribosyl)-anthranilate (PRA). This is Anthranilate phosphoribosyltransferase from Methanoculleus marisnigri (strain ATCC 35101 / DSM 1498 / JR1).